An 85-amino-acid polypeptide reads, in one-letter code: Actobindin homolog (85 aa).

The WH2 domain maps to 35–52 (DRNELLSGIKEGKELKKA).

Is able to bind two actin monomers at high concentrations of G-actin. The protein is Actobindin homolog of Entamoeba histolytica.